Consider the following 68-residue polypeptide: Copper transport protein ATOX1 (68 aa).

An HMA domain is found at methionine 1–serine 63. 2 residues coordinate Cu cation: cysteine 12 and cysteine 15. Position 47 is a phosphoserine (serine 47). At lysine 60 the chain carries N6-acetyllysine.

The protein belongs to the ATX1 family. As to quaternary structure, homodimer. Interacts with ATP7B. Interacts with ATP7A. Interacts (via dimer form) with SLC31A1 (via C-terminal domain); this interaction improves ATOX1 stability and controls intracellular Cu(I) levels.

Binds and deliver cytosolic copper to the copper ATPase proteins. May be important in cellular antioxidant defense. The protein is Copper transport protein ATOX1 of Mus musculus (Mouse).